The sequence spans 392 residues: 1-deoxy-D-xylulose 5-phosphate reductoisomerase (392 aa).

NADPH-binding residues include Thr-10, Gly-11, Ser-12, Ile-13, and Asn-124. Lys-125 is a 1-deoxy-D-xylulose 5-phosphate binding site. Position 126 (Glu-126) interacts with NADPH. Asp-150 provides a ligand contact to Mn(2+). 1-deoxy-D-xylulose 5-phosphate is bound by residues Ser-151, Glu-152, Ser-180, and His-203. Residue Glu-152 coordinates Mn(2+). Gly-209 contacts NADPH. Residues Ser-216, Asn-221, Lys-222, and Glu-225 each coordinate 1-deoxy-D-xylulose 5-phosphate. Glu-225 contacts Mn(2+).

The protein belongs to the DXR family. It depends on Mg(2+) as a cofactor. The cofactor is Mn(2+).

It carries out the reaction 2-C-methyl-D-erythritol 4-phosphate + NADP(+) = 1-deoxy-D-xylulose 5-phosphate + NADPH + H(+). Its pathway is isoprenoid biosynthesis; isopentenyl diphosphate biosynthesis via DXP pathway; isopentenyl diphosphate from 1-deoxy-D-xylulose 5-phosphate: step 1/6. Catalyzes the NADPH-dependent rearrangement and reduction of 1-deoxy-D-xylulose-5-phosphate (DXP) to 2-C-methyl-D-erythritol 4-phosphate (MEP). In Saccharophagus degradans (strain 2-40 / ATCC 43961 / DSM 17024), this protein is 1-deoxy-D-xylulose 5-phosphate reductoisomerase.